The primary structure comprises 108 residues: uncharacterized protein (108 aa).

Positions 7–106 constitute an HTH hxlR-type domain; that stretch reads CPRFEKAVDI…WATEWIDPSF (100 aa).

This is an uncharacterized protein from Bacillus subtilis (strain 168).